Consider the following 224-residue polypeptide: tRNA (guanine-N(7)-)-methyltransferase (224 aa).

Residues Glu56, Glu81, Asp108, and Asp131 each contribute to the S-adenosyl-L-methionine site. Asp131 is an active-site residue. Residues Lys135, Asp167, and 202–205 (TKFE) each bind substrate.

It belongs to the class I-like SAM-binding methyltransferase superfamily. TrmB family.

It catalyses the reaction guanosine(46) in tRNA + S-adenosyl-L-methionine = N(7)-methylguanosine(46) in tRNA + S-adenosyl-L-homocysteine. It participates in tRNA modification; N(7)-methylguanine-tRNA biosynthesis. Functionally, catalyzes the formation of N(7)-methylguanine at position 46 (m7G46) in tRNA. The sequence is that of tRNA (guanine-N(7)-)-methyltransferase from Nitrosomonas europaea (strain ATCC 19718 / CIP 103999 / KCTC 2705 / NBRC 14298).